Here is a 191-residue protein sequence, read N- to C-terminus: Thymidylate kinase (191 aa).

Residue 7-14 (GVDGAGKS) coordinates ATP.

Belongs to the thymidylate kinase family.

The catalysed reaction is dTMP + ATP = dTDP + ADP. Phosphorylation of dTMP to form dTDP in both de novo and salvage pathways of dTTP synthesis. This is Thymidylate kinase from Helicobacter pylori (strain Shi470).